We begin with the raw amino-acid sequence, 599 residues long: Subtilisin-like protease 1 (599 aa).

An N-terminal signal peptide occupies residues 1 to 20; it reads MRTVFIYACIISLVLRTIPA. The propeptide at 21-195 is inhibition peptide; that stretch reads HNDLMSKEKE…VESDELVGAD (175 aa). An N-linked (GlcNAc...) asparagine glycan is attached at Asn-57. Positions 74–101 form a coiled coil; that stretch reads EDAPKEELNKIEMEKKKAEEEAKNSKKK. Residues Asn-123, Thr-126, Pro-128, and Gly-183 each contribute to the Ca(2+) site. The N-linked (GlcNAc...) asparagine glycan is linked to Asn-227. Ca(2+) is bound at residue Asp-251. One can recognise a Peptidase S8 domain in the interval 257-574; it reads QWGLDLARLD…GGYIDILNAV (318 aa). Disulfide bonds link Cys-283–Cys-393 and Cys-372–Cys-389. Catalysis depends on Asp-286, which acts as the Charge relay system. Ca(2+) is bound by residues Asp-295, Glu-306, Asp-314, Asp-315, Asp-316, Asn-318, Ile-320, Asp-322, and Asp-323. The N-linked (GlcNAc...) asparagine glycan is linked to Asn-331. The active-site Charge relay system is the His-342. Ile-353 lines the Ca(2+) pocket. The N-linked (GlcNAc...) asparagine glycan is linked to Asn-355. Asn-356, Ile-358, and Val-360 together coordinate Ca(2+). Residues Asn-402 and Asn-434 are each glycosylated (N-linked (GlcNAc...) asparagine). Cys-435 and Cys-448 are joined by a disulfide. Ser-519 functions as the Charge relay system in the catalytic mechanism.

It belongs to the peptidase S8 family. The N-terminal prodomain is cleaved.

It localises to the secreted. The protein resides in the parasitophorous vacuole lumen. It is found in the cytoplasmic vesicle. Its subcellular location is the secretory vesicle. The enzyme catalyses Hydrolysis of proteins with broad specificity for peptide bonds, and a preference for a large uncharged residue in P1. Hydrolyzes peptide amides.. Functionally, mediates the proteolytic maturation of serine protease SERA3. Mediates the proteolytic maturation of MSP1, and thereby may prime the parasite cell surface for invasion of fresh erythrocytes. Required for completion of the parasite pre-erythrocytic stages. Required for hepatic schizont development and merozoite formation. Required for the egress of the hepatic merozoites from the parasitophorous vacuole. Required for parasite infectivity during blood stages. Required for male gamete egress. The protein is Subtilisin-like protease 1 of Plasmodium berghei (strain Anka).